Reading from the N-terminus, the 357-residue chain is Trans-enoyl reductase resD (357 aa).

Residue Tyr211 participates in NADP(+) binding.

Belongs to the zinc-containing alcohol dehydrogenase family.

It functions in the pathway antifungal biosynthesis. Trans-enoyl reductase; part of the gene cluster that mediates the biosynthesis of the tetrahydropyranyl antifungal agent restricticin that acts as an inhibitor of CYP51 and blocks the ergosterol biosynthesis. The highly reducing polyketide synthase resH, the short chain dehydrogenase resG, the cyclase resF, the FAD-dependent monooxygenase resA and the enoylreductase resD are required to generate the first stable intermediate desmethylrestrictinol. ResH with resD biosynthesize the first polyketide chain intermediate that is reduced by resG, followed by epoxidation by resA before 6-endo cyclization via epoxide opening by resF leads to desmethylrestrictinol. The methyltransferase resE then catalyzes the C4 O-methylation of desmethylrestrictinol to produce restrictinol, and the nonribosomal peptide synthetase resC catalyzes the C3 esterification of restrictinol with glycine that leads to restricticin. This is Trans-enoyl reductase resD from Aspergillus sclerotiorum.